Reading from the N-terminus, the 260-residue chain is MQLSRRAEIGNPSSRNLSPRINEKVELLGQALEHARRAGMSSSLMEYGRQVARHLSANVQPDEKILSLDIRNLPLLAASYNRRYPDLDLRHMDSPARFFDALNDRSSDGAWRAVVRLADGEQHHVAADVRTRAGAAPTIIVMEGANFYTFVASYFKLRGDSFRQLGTQAKWAFIEVGAQKSAADCVMFGVQFALAAYRELPTFDAWHDNLHHHGTIAHEGDYSSDYMPRRHAGICANKPFSWGEVPPSDLLQALSLQQCN.

Catalysis depends on residues His-123 and Glu-143. CoA is bound at residue His-123. Residue 180-181 (KS) coordinates CoA. Residue Cys-185 is part of the active site.

It belongs to the acetyltransferase YopJ family.

It carries out the reaction L-threonyl-[protein] + acetyl-CoA = O-acetyl-L-threonyl-[protein] + CoA. The enzyme catalyses L-seryl-[protein] + acetyl-CoA = O-acetyl-L-seryl-[protein] + CoA. Its function is as follows. Serine/threonine-protein acetyltransferase translocated into infected cells, which mediates acetylation of serine and threonine residues of host target proteins. The sequence is that of Serine/threonine-protein acetyltransferase NGR_a02610 from Sinorhizobium fredii (strain NBRC 101917 / NGR234).